Reading from the N-terminus, the 232-residue chain is uncharacterized protein (232 aa).

An N-terminal signal peptide occupies residues 1-32; sequence MTTSKIATAFKTATFALAAGAVALGLASPADA.

This is an uncharacterized protein from Mycobacterium bovis (strain ATCC BAA-935 / AF2122/97).